The following is a 187-amino-acid chain: Orotate phosphoribosyltransferase (187 aa).

Residues Arg98, Lys99, Lys102, His104, and 128-136 (EDVTTTGGS) contribute to the 5-phospho-alpha-D-ribose 1-diphosphate site. Positions 132 and 160 each coordinate orotate.

This sequence belongs to the purine/pyrimidine phosphoribosyltransferase family. PyrE subfamily. Homodimer. Requires Mg(2+) as cofactor.

The enzyme catalyses orotidine 5'-phosphate + diphosphate = orotate + 5-phospho-alpha-D-ribose 1-diphosphate. The protein operates within pyrimidine metabolism; UMP biosynthesis via de novo pathway; UMP from orotate: step 1/2. In terms of biological role, catalyzes the transfer of a ribosyl phosphate group from 5-phosphoribose 1-diphosphate to orotate, leading to the formation of orotidine monophosphate (OMP). This Rhodopseudomonas palustris (strain ATCC BAA-98 / CGA009) protein is Orotate phosphoribosyltransferase.